The primary structure comprises 255 residues: MVPWLGPDDPFPSVERALGTASGAPGLLAASADLLPSRLIDAYRRGIFPWYSDGQPVLWWSPDPRMILVPAEFRISATFRKTLKRVLREPRWEIRVDCDFAGVMRACAQAPRRGQRGTWITAEIIDAYSSLHRAGDAHSIETWLDGRRVGGLYGVSFGRMFFGESMYAHASDASKIALAALVAHLREHRVEMIDCQQNTSHLASLGGREIARKTFVAHVRRAVAEPPIPWRFDKRVVAGLLGQAASATAADAFDR.

Belongs to the L/F-transferase family.

Its subcellular location is the cytoplasm. The enzyme catalyses N-terminal L-lysyl-[protein] + L-leucyl-tRNA(Leu) = N-terminal L-leucyl-L-lysyl-[protein] + tRNA(Leu) + H(+). It catalyses the reaction N-terminal L-arginyl-[protein] + L-leucyl-tRNA(Leu) = N-terminal L-leucyl-L-arginyl-[protein] + tRNA(Leu) + H(+). The catalysed reaction is L-phenylalanyl-tRNA(Phe) + an N-terminal L-alpha-aminoacyl-[protein] = an N-terminal L-phenylalanyl-L-alpha-aminoacyl-[protein] + tRNA(Phe). Functionally, functions in the N-end rule pathway of protein degradation where it conjugates Leu, Phe and, less efficiently, Met from aminoacyl-tRNAs to the N-termini of proteins containing an N-terminal arginine or lysine. The sequence is that of Leucyl/phenylalanyl-tRNA--protein transferase from Burkholderia pseudomallei (strain 668).